We begin with the raw amino-acid sequence, 95 residues long: Small ribosomal subunit protein bS6 (95 aa).

Belongs to the bacterial ribosomal protein bS6 family.

Binds together with bS18 to 16S ribosomal RNA. The sequence is that of Small ribosomal subunit protein bS6 from Bacillus licheniformis (strain ATCC 14580 / DSM 13 / JCM 2505 / CCUG 7422 / NBRC 12200 / NCIMB 9375 / NCTC 10341 / NRRL NRS-1264 / Gibson 46).